Reading from the N-terminus, the 119-residue chain is Large ribosomal subunit protein bL20c (119 aa).

Belongs to the bacterial ribosomal protein bL20 family.

It is found in the plastid. Its subcellular location is the chloroplast. Functionally, binds directly to 23S ribosomal RNA and is necessary for the in vitro assembly process of the 50S ribosomal subunit. It is not involved in the protein synthesizing functions of that subunit. The sequence is that of Large ribosomal subunit protein bL20c from Saccharum officinarum (Sugarcane).